We begin with the raw amino-acid sequence, 287 residues long: Elongation factor Ts (287 aa).

Residues Thr80–Leu83 form an involved in Mg(2+) ion dislocation from EF-Tu region.

This sequence belongs to the EF-Ts family.

The protein localises to the cytoplasm. In terms of biological role, associates with the EF-Tu.GDP complex and induces the exchange of GDP to GTP. It remains bound to the aminoacyl-tRNA.EF-Tu.GTP complex up to the GTP hydrolysis stage on the ribosome. The polypeptide is Elongation factor Ts (Pseudomonas putida (strain ATCC 47054 / DSM 6125 / CFBP 8728 / NCIMB 11950 / KT2440)).